We begin with the raw amino-acid sequence, 240 residues long: Enolase-phosphatase E1 (240 aa).

2 residues coordinate Mg(2+): aspartate 9 and glutamate 11. Residues 129–130 (SS) and lysine 168 contribute to the substrate site. Residue aspartate 195 participates in Mg(2+) binding.

This sequence belongs to the HAD-like hydrolase superfamily. MasA/MtnC family. Monomer. Requires Mg(2+) as cofactor.

Its subcellular location is the cytoplasm. The protein localises to the nucleus. The enzyme catalyses 5-methylsulfanyl-2,3-dioxopentyl phosphate + H2O = 1,2-dihydroxy-5-(methylsulfanyl)pent-1-en-3-one + phosphate. Its pathway is amino-acid biosynthesis; L-methionine biosynthesis via salvage pathway; L-methionine from S-methyl-5-thio-alpha-D-ribose 1-phosphate: step 3/6. The protein operates within amino-acid biosynthesis; L-methionine biosynthesis via salvage pathway; L-methionine from S-methyl-5-thio-alpha-D-ribose 1-phosphate: step 4/6. Its function is as follows. Bifunctional enzyme that catalyzes the enolization of 2,3-diketo-5-methylthiopentyl-1-phosphate (DK-MTP-1-P) into the intermediate 2-hydroxy-3-keto-5-methylthiopentenyl-1-phosphate (HK-MTPenyl-1-P), which is then dephosphorylated to form the acireductone 1,2-dihydroxy-3-keto-5-methylthiopentene (DHK-MTPene). This Candida tropicalis (strain ATCC MYA-3404 / T1) (Yeast) protein is Enolase-phosphatase E1.